The following is a 298-amino-acid chain: WRKY transcription factor 22 (298 aa).

Disordered regions lie at residues glutamate 75–lysine 116 and alanine 181–serine 220. Positions serine 88–serine 103 are enriched in low complexity. Residues arginine 107–lysine 116 are compositionally biased toward basic residues. Positions alanine 122 to proline 188 form a DNA-binding region, WRKY. Over residues histidine 190–serine 220 the composition is skewed to polar residues.

This sequence belongs to the WRKY group II-e family.

It localises to the nucleus. Functionally, transcription factor involved in the expression of defense genes in innate immune response of plants. Interacts specifically with the W box (5'-(T)TGAC[CT]-3'), a frequently occurring elicitor-responsive cis-acting element. Activates WRKY 29, SIRK and its own promoters. In Arabidopsis thaliana (Mouse-ear cress), this protein is WRKY transcription factor 22 (WRKY22).